Here is a 381-residue protein sequence, read N- to C-terminus: Dual specificity protein phosphatase 6 (381 aa).

One can recognise a Rhodanese domain in the interval 30–148 (GNERLLLMDC…FQAEFSLHCE (119 aa)). The segment at 176 to 203 (SSSDIESDLDRDPNSATDSDGSPLSNSQ) is disordered. Residues 189–203 (NSATDSDGSPLSNSQ) are compositionally biased toward polar residues. A Tyrosine-protein phosphatase domain is found at 206 to 349 (FPVEILPFLY…LLDFERTLGL (144 aa)). The Phosphocysteine intermediate role is filled by cysteine 293.

Belongs to the protein-tyrosine phosphatase family. Non-receptor class dual specificity subfamily. Interacts with MAPK1/ERK2. Post-translationally, ubiquitinated by the SCF(FBXO31) complex, leading to its proteasomal degradation. As to expression, expressed in keratinocytes (at protein level).

It localises to the cytoplasm. It carries out the reaction O-phospho-L-tyrosyl-[protein] + H2O = L-tyrosyl-[protein] + phosphate. The enzyme catalyses O-phospho-L-seryl-[protein] + H2O = L-seryl-[protein] + phosphate. The catalysed reaction is O-phospho-L-threonyl-[protein] + H2O = L-threonyl-[protein] + phosphate. In terms of biological role, dual specificity protein phosphatase, which mediates dephosphorylation and inactivation of MAP kinases. Has a specificity for the ERK family. Plays an important role in alleviating chronic postoperative pain. Necessary for the normal dephosphorylation of the long-lasting phosphorylated forms of spinal MAPK1/3 and MAP kinase p38 induced by peripheral surgery, which drives the resolution of acute postoperative allodynia. Also important for dephosphorylation of MAPK1/3 in local wound tissue, which further contributes to resolution of acute pain. Promotes cell differentiation by regulating MAPK1/MAPK3 activity and regulating the expression of AP1 transcription factors. The sequence is that of Dual specificity protein phosphatase 6 (DUSP6) from Homo sapiens (Human).